Here is a 205-residue protein sequence, read N- to C-terminus: GTP-binding protein yptV5 (205 aa).

Residue 15–22 participates in GTP binding; sequence GDSGVGKT. Residues 37 to 45 carry the Effector region motif; sequence YKATIGADF. Residues 63–67 and 125–128 contribute to the GTP site; these read DTAGQ and NKID. Residues Cys204 and Cys205 are each lipidated (S-geranylgeranyl cysteine).

It belongs to the small GTPase superfamily. Rab family.

It localises to the cell membrane. Functionally, protein transport. Probably involved in vesicular traffic. The polypeptide is GTP-binding protein yptV5 (YPTV5) (Volvox carteri (Green alga)).